The primary structure comprises 168 residues: Protein-export protein SecB (168 aa).

It belongs to the SecB family. In terms of assembly, homotetramer, a dimer of dimers. One homotetramer interacts with 1 SecA dimer.

It localises to the cytoplasm. One of the proteins required for the normal export of preproteins out of the cell cytoplasm. It is a molecular chaperone that binds to a subset of precursor proteins, maintaining them in a translocation-competent state. It also specifically binds to its receptor SecA. The polypeptide is Protein-export protein SecB (Sinorhizobium medicae (strain WSM419) (Ensifer medicae)).